Reading from the N-terminus, the 423-residue chain is Protein CLP1 homolog (423 aa).

ATP contacts are provided by residues Glu16, Lys57, and Asp119–Thr124.

It belongs to the Clp1 family. Clp1 subfamily.

Its subcellular location is the nucleus. Required for endonucleolytic cleavage during polyadenylation-dependent pre-mRNA 3'-end formation. In Drosophila melanogaster (Fruit fly), this protein is Protein CLP1 homolog (cbc).